A 288-amino-acid polypeptide reads, in one-letter code: Chitinase 5 (288 aa).

The first 29 residues, 1 to 29 (MANSPTPTMLAFLALGLALLLSATGQASA), serve as a signal peptide directing secretion. Residues 30–64 (QNCGCQSNMCCSKWGYCGTGKDYCGDGCRSGPCYG) enclose the Chitin-binding type-1 domain. Cystine bridges form between Cys-32/Cys-40, Cys-34/Cys-46, Cys-39/Cys-53, Cys-57/Cys-62, Cys-107/Cys-156, Cys-169/Cys-178, and Cys-256/Cys-288. Glu-151 functions as the Proton donor in the catalytic mechanism.

It belongs to the glycosyl hydrolase 19 family. Chitinase class IV subfamily. Expressed in sheaths and meristems and at lower levels in roots and leaves.

The enzyme catalyses Random endo-hydrolysis of N-acetyl-beta-D-glucosaminide (1-&gt;4)-beta-linkages in chitin and chitodextrins.. In terms of biological role, may function in reproductive organs during embryogenesis and seed maturation. This is Chitinase 5 (Cht5) from Oryza sativa subsp. japonica (Rice).